A 209-amino-acid chain; its full sequence is Uracil phosphoribosyltransferase (209 aa).

5-phospho-alpha-D-ribose 1-diphosphate contacts are provided by residues R79, R104, and 131–139; that span reads DPMLATGGS. Residues I194 and 199 to 201 contribute to the uracil site; that span reads GDA. D200 is a 5-phospho-alpha-D-ribose 1-diphosphate binding site.

The protein belongs to the UPRTase family. Requires Mg(2+) as cofactor.

It carries out the reaction UMP + diphosphate = 5-phospho-alpha-D-ribose 1-diphosphate + uracil. The protein operates within pyrimidine metabolism; UMP biosynthesis via salvage pathway; UMP from uracil: step 1/1. Allosterically activated by GTP. Functionally, catalyzes the conversion of uracil and 5-phospho-alpha-D-ribose 1-diphosphate (PRPP) to UMP and diphosphate. This is Uracil phosphoribosyltransferase from Clostridium kluyveri (strain NBRC 12016).